A 131-amino-acid chain; its full sequence is Small ribosomal subunit protein uS8 (131 aa).

The protein belongs to the universal ribosomal protein uS8 family. As to quaternary structure, part of the 30S ribosomal subunit. Contacts proteins S5 and S12.

In terms of biological role, one of the primary rRNA binding proteins, it binds directly to 16S rRNA central domain where it helps coordinate assembly of the platform of the 30S subunit. This chain is Small ribosomal subunit protein uS8, found in Clostridium novyi (strain NT).